The sequence spans 385 residues: Taurine hydroxylase-like protein SAT17 (385 aa).

The protein operates within mycotoxin biosynthesis. In terms of biological role, taurine hydroxylase-like protein; part of the satratoxin SC3 cluster involved in the biosynthesis of satratoxins, trichothecene mycotoxins that are associated with human food poisonings. Satratoxins are suggested to be made by products of multiple gene clusters (SC1, SC2 and SC3) that encode 21 proteins in all, including polyketide synthases, acetyltransferases, and other enzymes expected to modify the trichothecene skeleton. SC1 encodes 10 proteins, SAT1 to SAT10. The largest are SAT8, which encodes a putative polyketide synthase (PKS) with a conventional non-reducing architecture, and SAT10, a putative protein containing four ankyrin repeats and thus may be involved in protein scaffolding. The putative short-chain reductase SAT3 may assist the PKS in some capacity. SAT6 contains a secretory lipase domain and acts probably as a trichothecene esterase. SAT5 encodes a putative acetyltransferase, and so, with SAT6, may affect endogenous protection from toxicity. The probable transcription factor SAT9 may regulate the expression of the SC1 cluster. SC2 encodes proteins SAT11 to SAT16, the largest of which encodes the putative reducing PKS SAT13. SAT11 is a cytochrome P450 monooxygenase, while SAT14 and SAT16 are probable acetyltransferases. The SC2 cluster may be regulated by the transcription factor SAT15. SC3 is a small cluster that encodes 5 proteins, SAT17 to SAT21. SAT21 is a putative MFS-type transporter which may have a role in exporting secondary metabolites. The four other proteins putatively encoded in SC3 include the taurine hydroxylase-like protein SAT17, the O-methyltransferase SAT18, the acetyltransferase SAT19, and the Cys6-type zinc finger SAT20, the latter being probably involved in regulation of SC3 expression. This is Taurine hydroxylase-like protein SAT17 from Stachybotrys chartarum (strain CBS 109288 / IBT 7711) (Toxic black mold).